A 248-amino-acid polypeptide reads, in one-letter code: Clathrin light chain A (248 aa).

The segment at 1 to 92 (MAELDPFGAP…YYQESNGPTD (92 aa)) is disordered. Positions 13–25 (APGGPALGNGVAG) are enriched in gly residues. Residues 61-71 (GPQPHGEPPGG) are compositionally biased toward pro residues. Positions 100 to 162 (VDRLQSEPES…QLQKTKANNR (63 aa)) are involved in binding clathrin heavy chain. Phosphoserine is present on residues S105 and S206. K223 carries the post-translational modification N6-acetyllysine. Phosphoserine is present on S236. At K242 the chain carries N6-acetyllysine.

This sequence belongs to the clathrin light chain family. Clathrin coats are formed from molecules containing 3 heavy chains and 3 light chains. Interacts with CALY; the interaction stimulates clathrin self-assembly and clathrin-mediated endocytosis. Interacts with CKAP5 and TACC3 forming the TACC3/ch-TOG/clathrin complex located at spindle inter-microtubules bridges; the complex implicates clathrin triskelions.

It localises to the cytoplasmic vesicle membrane. Its subcellular location is the membrane. The protein resides in the coated pit. It is found in the cytoplasm. The protein localises to the cytoskeleton. It localises to the spindle. In terms of biological role, clathrin is the major protein of the polyhedral coat of coated pits and vesicles. Acts as a component of the TACC3/ch-TOG/clathrin complex proposed to contribute to stabilization of kinetochore fibers of the mitotic spindle by acting as inter-microtubule bridge. The chain is Clathrin light chain A (CLTA) from Homo sapiens (Human).